Here is a 342-residue protein sequence, read N- to C-terminus: Prostasin (342 aa).

An N-terminal signal peptide occupies residues 1 to 29; it reads MAPRVGLGLGQLEAVTILLLLGLLQSGIR. Positions 30 to 32 are cleaved as a propeptide — activation peptide; it reads ADG. 2 disulfides stabilise this stretch: Cys37–Cys154 and Cys70–Cys86. The Peptidase S1 domain maps to 45–286; it reads ITGGGSAKPG…YASWIHHHVA (242 aa). The active-site Charge relay system is His85. N-linked (GlcNAc...) asparagine glycosylation is present at Asn110. Asp134 functions as the Charge relay system in the catalytic mechanism. A glycan (N-linked (GlcNAc...) asparagine) is linked at Asn159. Intrachain disulfides connect Cys168/Cys244, Cys201/Cys223, and Cys234/Cys262. Ser238 (charge relay system) is an active-site residue. Residues 320-340 traverse the membrane as a helical segment; the sequence is LLRPVLFLPLGLTLGLLSLWL. Positions 323-342 are excised as a propeptide; the sequence is PVLFLPLGLTLGLLSLWLEH.

The protein belongs to the peptidase S1 family. In terms of assembly, heterodimer of two chains, light and heavy, held by a disulfide bond.

The protein resides in the cell membrane. The protein localises to the secreted. It is found in the extracellular space. Possesses a trypsin-like cleavage specificity with a preference for poly-basic substrates. Stimulates epithelial sodium channel (ENaC) activity through activating cleavage of the gamma subunits (SCNN1G). The protein is Prostasin (Prss8) of Mus musculus (Mouse).